Here is a 418-residue protein sequence, read N- to C-terminus: Acyl-[acyl-carrier-protein] desaturase 4, chloroplastic (418 aa).

A chloroplast-targeting transit peptide spans 1–70 (MASSGLAVAA…ATAAAPADTA (70 aa)). Residues E152, E190, H193, E243, E276, and H279 each coordinate Fe cation.

The protein belongs to the fatty acid desaturase type 2 family. Homodimer. It depends on Fe(2+) as a cofactor.

It localises to the plastid. Its subcellular location is the chloroplast. It functions in the pathway lipid metabolism; fatty acid metabolism. In terms of biological role, introduces a cis double bond in the acyl chain of an acyl-[acyl-carrier protein]. The sequence is that of Acyl-[acyl-carrier-protein] desaturase 4, chloroplastic from Oryza sativa subsp. japonica (Rice).